Reading from the N-terminus, the 356-residue chain is Peptide chain release factor 1 (356 aa).

The residue at position 233 (glutamine 233) is an N5-methylglutamine.

The protein belongs to the prokaryotic/mitochondrial release factor family. Methylated by PrmC. Methylation increases the termination efficiency of RF1.

The protein localises to the cytoplasm. In terms of biological role, peptide chain release factor 1 directs the termination of translation in response to the peptide chain termination codons UAG and UAA. This chain is Peptide chain release factor 1 (prfA), found in Bacillus subtilis (strain 168).